The primary structure comprises 23 residues: Profilin (23 aa).

This sequence belongs to the profilin family. In terms of assembly, occurs in many kinds of cells as a complex with monomeric actin in a 1:1 ratio.

Its subcellular location is the cytoplasm. It is found in the cytoskeleton. Functionally, binds to actin and affects the structure of the cytoskeleton. At high concentrations, profilin prevents the polymerization of actin, whereas it enhances it at low concentrations. By binding to PIP2, it inhibits the formation of IP3 and DG. The chain is Profilin from Beta vulgaris (Sugar beet).